Here is a 156-residue protein sequence, read N- to C-terminus: Small ribosomal subunit protein uS7 (156 aa).

The protein belongs to the universal ribosomal protein uS7 family. Part of the 30S ribosomal subunit. Contacts proteins S9 and S11.

Functionally, one of the primary rRNA binding proteins, it binds directly to 16S rRNA where it nucleates assembly of the head domain of the 30S subunit. Is located at the subunit interface close to the decoding center, probably blocks exit of the E-site tRNA. This Salinispora arenicola (strain CNS-205) protein is Small ribosomal subunit protein uS7.